Consider the following 515-residue polypeptide: Maturase K (515 aa).

It belongs to the intron maturase 2 family. MatK subfamily.

The protein resides in the plastid. The protein localises to the chloroplast. Functionally, usually encoded in the trnK tRNA gene intron. Probably assists in splicing its own and other chloroplast group II introns. In Picea abies (Norway spruce), this protein is Maturase K.